We begin with the raw amino-acid sequence, 109 residues long: Translation initiation factor IF-1, chloroplastic (109 aa).

Positions 18 to 93 (KSLNQEKENL…TRGRIIYRLK (76 aa)) constitute an S1-like domain.

This sequence belongs to the IF-1 family. In terms of assembly, component of the 30S ribosomal translation pre-initiation complex which assembles on the 30S ribosome in the order IF-2 and IF-3, IF-1 and N-formylmethionyl-tRNA(fMet); mRNA recruitment can occur at any time during PIC assembly.

The protein localises to the plastid. Its subcellular location is the chloroplast. Functionally, one of the essential components for the initiation of protein synthesis. Stabilizes the binding of IF-2 and IF-3 on the 30S subunit to which N-formylmethionyl-tRNA(fMet) subsequently binds. Helps modulate mRNA selection, yielding the 30S pre-initiation complex (PIC). Upon addition of the 50S ribosomal subunit IF-1, IF-2 and IF-3 are released leaving the mature 70S translation initiation complex. The chain is Translation initiation factor IF-1, chloroplastic from Tupiella akineta (Green alga).